A 78-amino-acid polypeptide reads, in one-letter code: Large ribosomal subunit protein bL28 (78 aa).

Belongs to the bacterial ribosomal protein bL28 family.

The chain is Large ribosomal subunit protein bL28 from Prochlorococcus marinus (strain MIT 9303).